Consider the following 74-residue polypeptide: Antimicrobial peptide ToAp1 (74 aa).

A signal peptide spans 1–22 (MQMKYLIPIFFLVLIVADHCHA). Residue Lys39 is modified to Lysine amide. The propeptide occupies 40–74 (GRRKRDITAQIEQYRNIQKREAAELEELLANLPVY).

This sequence belongs to the non-disulfide-bridged peptide (NDBP) superfamily. Short antimicrobial peptide (group 4) family. As to expression, expressed by the venom gland.

It localises to the secreted. Its function is as follows. Antimicrobial peptide. Is able to kill Mycobacterium abscessus subsp. massiliense in a dose-dependent manner. Has antifungal activity against Candida spp. and one Cryptococcus neoformans strains with MICs values ranging from 12.5 to 200 uM. Also shows an inhibitory activity on C.albicans biofilms at high concentrations. Shows low cytotoxic activity and has weak hemolytic activity on human erythrocytes. Shows anti-inflammatory activities, since it decreases release of pro-inflammatory cytokines, and increases release of anti-inflammatory cytokines. Acts by blocking the Toll-like receptor 4 (TLR4). In addition, decreases the expression of costimulatory molecules such as CD80 and CD86 in LPS-stimulated cells. In vivo, does not induce immune cell migration. Helical wheel projections predict an amphipathic peptide with distinct hydrophobic and hydrophilic faces. The chain is Antimicrobial peptide ToAp1 from Tityus obscurus (Amazonian scorpion).